A 343-amino-acid chain; its full sequence is MTNFYKVFLAVFILVCCNISHAAVSFIGSTENDVGPSQSSYSRTHAMDNLPFVYNTGYNIGYQNANVWRISGGFCVGLDGKVDLPVVGSLDGQSIYGLTEEVGLLIWMGDTNYSRGTAMSGNSWENVFSGWCVGNYVSTQGLSVHVRPVILKRNSSAQYSVQKTSIGSIRMRPYNGSSAGSVQTTVNFSLNPFTLNDTVTSCRLLTPSAVNVSLAAISAGQLPSSGDEVVAGTTSLKLQCDAGVTVWATLTDATTPSNRSDILTLTGASTATGVGLRIYKNTDSTPLKFGPDSPVKGNENQWQLSTGTETSPSVRLYVKYVNTGEGINPGTVNGISTFTFSYQ.

A signal peptide spans 1-22 (MTNFYKVFLAVFILVCCNISHA). The segment at 23-199 (AVSFIGSTEN…LNPFTLNDTV (177 aa)) is receptor-binding lectin domain. A carbohydrate is bound by residues 65 to 66 (AN), 110 to 111 (DT), and 138 to 141 (STQG). Cys75 and Cys132 are disulfide-bonded. The segment at 200-343 (TSCRLLTPSA…GISTFTFSYQ (144 aa)) is fimbrillin-binding domain. The interval 287–307 (LKFGPDSPVKGNENQWQLSTG) is disordered. Over residues 298–307 (NENQWQLSTG) the composition is skewed to polar residues.

Belongs to the fimbrial protein family.

Its subcellular location is the fimbrium. Its function is as follows. Essential fimbrial adhesion factor that mediates binding to N-acetylglucosamine-containing receptors in the host intestinal microvilli, leading to colonization of the intestinal tissue, and diarrhea or septicemia. Also confers adhesiveness to laminin and basement membranes. The sequence is that of F17e-G fimbrial adhesin (f17eG) from Escherichia coli.